The primary structure comprises 300 residues: 33 kDa chaperonin (300 aa).

2 disulfides stabilise this stretch: Cys240–Cys242 and Cys273–Cys276.

Belongs to the HSP33 family. In terms of processing, under oxidizing conditions two disulfide bonds are formed involving the reactive cysteines. Under reducing conditions zinc is bound to the reactive cysteines and the protein is inactive.

The protein localises to the cytoplasm. Redox regulated molecular chaperone. Protects both thermally unfolding and oxidatively damaged proteins from irreversible aggregation. Plays an important role in the bacterial defense system toward oxidative stress. The chain is 33 kDa chaperonin from Cyanothece sp. (strain PCC 7425 / ATCC 29141).